Reading from the N-terminus, the 100-residue chain is Small ribosomal subunit protein uS14 (100 aa).

The protein belongs to the universal ribosomal protein uS14 family. In terms of assembly, part of the 30S ribosomal subunit. Contacts proteins S3 and S10.

Binds 16S rRNA, required for the assembly of 30S particles and may also be responsible for determining the conformation of the 16S rRNA at the A site. The polypeptide is Small ribosomal subunit protein uS14 (Prochlorococcus marinus (strain AS9601)).